The sequence spans 478 residues: Aspartyl/glutamyl-tRNA(Asn/Gln) amidotransferase subunit B (478 aa).

Belongs to the GatB/GatE family. GatB subfamily. Heterotrimer of A, B and C subunits.

The enzyme catalyses L-glutamyl-tRNA(Gln) + L-glutamine + ATP + H2O = L-glutaminyl-tRNA(Gln) + L-glutamate + ADP + phosphate + H(+). The catalysed reaction is L-aspartyl-tRNA(Asn) + L-glutamine + ATP + H2O = L-asparaginyl-tRNA(Asn) + L-glutamate + ADP + phosphate + 2 H(+). In terms of biological role, allows the formation of correctly charged Asn-tRNA(Asn) or Gln-tRNA(Gln) through the transamidation of misacylated Asp-tRNA(Asn) or Glu-tRNA(Gln) in organisms which lack either or both of asparaginyl-tRNA or glutaminyl-tRNA synthetases. The reaction takes place in the presence of glutamine and ATP through an activated phospho-Asp-tRNA(Asn) or phospho-Glu-tRNA(Gln). This is Aspartyl/glutamyl-tRNA(Asn/Gln) amidotransferase subunit B from Brevibacillus brevis (strain 47 / JCM 6285 / NBRC 100599).